A 143-amino-acid polypeptide reads, in one-letter code: Nucleoside diphosphate kinase (143 aa).

Residues Lys11, Phe59, Arg87, Thr93, Arg104, and Asn114 each contribute to the ATP site. Catalysis depends on His117, which acts as the Pros-phosphohistidine intermediate.

The protein belongs to the NDK family. As to quaternary structure, homotetramer. Mg(2+) serves as cofactor.

Its subcellular location is the cytoplasm. It catalyses the reaction a 2'-deoxyribonucleoside 5'-diphosphate + ATP = a 2'-deoxyribonucleoside 5'-triphosphate + ADP. The enzyme catalyses a ribonucleoside 5'-diphosphate + ATP = a ribonucleoside 5'-triphosphate + ADP. In terms of biological role, major role in the synthesis of nucleoside triphosphates other than ATP. The ATP gamma phosphate is transferred to the NDP beta phosphate via a ping-pong mechanism, using a phosphorylated active-site intermediate. This chain is Nucleoside diphosphate kinase, found in Shewanella woodyi (strain ATCC 51908 / MS32).